The following is a 205-amino-acid chain: Ribosome maturation factor RimP (205 aa).

It belongs to the RimP family.

The protein resides in the cytoplasm. Required for maturation of 30S ribosomal subunits. The protein is Ribosome maturation factor RimP of Sinorhizobium fredii (strain NBRC 101917 / NGR234).